A 518-amino-acid chain; its full sequence is Glucose-1-phosphate adenylyltransferase large subunit 2, cytosolic (518 aa).

The protein belongs to the bacterial/plant glucose-1-phosphate adenylyltransferase family. Heterotetramer composed of two small and two large subunits.

The protein localises to the cytoplasm. It localises to the cytosol. The enzyme catalyses alpha-D-glucose 1-phosphate + ATP + H(+) = ADP-alpha-D-glucose + diphosphate. It functions in the pathway glycan biosynthesis; starch biosynthesis. Its activity is regulated as follows. Activated by 3'phosphoglycerate, inhibited by orthophosphate. Allosteric regulation. Inhibited by inorganic phosphate (Pi). Its function is as follows. Involved in synthesis of starch. Catalyzes the synthesis of ADP-glucose, a molecule that serves as an activated glycosyl donor for alpha-1,4-glucan synthesis. Essential for starch synthesis in seed endosperm. Is essential for both catalytic and allosteric regulatory properties of the cytosolic heterotetramer enzyme. This Oryza sativa subsp. japonica (Rice) protein is Glucose-1-phosphate adenylyltransferase large subunit 2, cytosolic.